A 72-amino-acid polypeptide reads, in one-letter code: uncharacterized protein (72 aa).

Residues 11–31 traverse the membrane as a helical segment; that stretch reads WCCTVLSAFGVVILSVIAHLF.

The protein resides in the membrane. This is an uncharacterized protein from Saccharomyces cerevisiae (strain ATCC 204508 / S288c) (Baker's yeast).